A 283-amino-acid polypeptide reads, in one-letter code: Adenylate kinase 2, chloroplastic (283 aa).

The N-terminal 59 residues, 1–59 (MTGCVNSISPPPVTLYRHRASPSRSSFSLSGDALHSLYRHRRVSRSPSIIAPKFQIVAA), are a transit peptide targeting the chloroplast. 74–79 (ASGKGT) serves as a coordination point for ATP. Residues 94–123 (SAGDLLRAEIASGSENGRRAKEHMEKGQLV) form an NMP region. AMP is bound by residues R100, 121-123 (QLV), 150-153 (GYPR), and Q157. Residues 187–220 (GRRLDPVTGKIYHLKYSPPETEEIAVRLTQRFDD) form an LID region. R188 lines the ATP pocket. Residues R217 and R228 each coordinate AMP.

This sequence belongs to the adenylate kinase family. Monomer.

It is found in the plastid. The protein localises to the chloroplast stroma. It carries out the reaction AMP + ATP = 2 ADP. Catalyzes the reversible transfer of the terminal phosphate group between ATP and AMP. Plays an important role in cellular energy homeostasis and in adenine nucleotide metabolism. Plays a major role in the equilibration of adenylates and de novo synthesis of ADP in the plastid stroma. The chain is Adenylate kinase 2, chloroplastic from Arabidopsis thaliana (Mouse-ear cress).